The sequence spans 376 residues: NADPH oxidase organizer 1 (376 aa).

Residues 1–131 form the PX domain; it reads MAGPRYPVSV…GFFAPQPLDL (131 aa). 2 consecutive SH3 domains span residues 163-225 and 237-296; these read LEAQ…EAAP and SSGP…PEGL. The tract at residues 302–376 is disordered; sequence GTGFRGGDDP…DSVPHPTTEQ (75 aa). Positions 326–335 are enriched in pro residues; sequence APPPTVPTRP. The segment at 328–337 is proline-rich region; mediates mutually exclusive interactions with itself and NOXA1; that stretch reads PPTVPTRPSP.

As to quaternary structure, interacts with NOX1, NOXA1, CYBA/p22phox and NCF2/p67phox. Interacts with SH3PXD2A and SH3PXD2B. As to expression, expressed in testis, small and large intestines, liver, kidney and pancreas. Isoform 3 is mainly expressed in colon. Isoform 1 is preferentially expressed in testis.

Its subcellular location is the cell membrane. Functionally, constitutively potentiates the superoxide-generating activity of NOX1 and NOX3 and is required for the biogenesis of otoconia/otolith, which are crystalline structures of the inner ear involved in the perception of gravity. Isoform 3 is more potent than isoform 1 in activating NOX3. Together with NOXA1, may also substitute to NCF1/p47phox and NCF2/p67phox in supporting the phagocyte NOX2/gp91phox superoxide-generating activity. In Homo sapiens (Human), this protein is NADPH oxidase organizer 1 (NOXO1).